The following is a 268-amino-acid chain: Pantothenate synthetase (268 aa).

Position 18-25 (methionine 18–histidine 25) interacts with ATP. The Proton donor role is filled by histidine 25. Glutamine 49 is a binding site for (R)-pantoate. Position 49 (glutamine 49) interacts with beta-alanine. Glycine 135–aspartate 138 serves as a coordination point for ATP. Residue glutamine 141 participates in (R)-pantoate binding. Residues isoleucine 164 and leucine 172–arginine 175 contribute to the ATP site.

This sequence belongs to the pantothenate synthetase family. In terms of assembly, homodimer.

It localises to the cytoplasm. The enzyme catalyses (R)-pantoate + beta-alanine + ATP = (R)-pantothenate + AMP + diphosphate + H(+). The protein operates within cofactor biosynthesis; (R)-pantothenate biosynthesis; (R)-pantothenate from (R)-pantoate and beta-alanine: step 1/1. Catalyzes the condensation of pantoate with beta-alanine in an ATP-dependent reaction via a pantoyl-adenylate intermediate. The polypeptide is Pantothenate synthetase (Dehalococcoides mccartyi (strain CBDB1)).